A 459-amino-acid polypeptide reads, in one-letter code: NADH oxidase (459 aa).

Residue Asn-10 coordinates FAD. Residue His-11 is the Proton acceptor of the active site. Residues Ala-12, Asp-34, Gln-35, Cys-44, Val-81, Ala-110, Ser-113, Lys-143, and Tyr-172 each coordinate FAD. Cys-44 functions as the Redox-active in the catalytic mechanism. The residue at position 44 (Cys-44) is a Cysteine sulfinic acid (-SO2H). Residues Ile-173, Asp-192, Tyr-201, and Gly-256 each contribute to the NAD(+) site. An FAD-binding site is contributed by Asp-294. Position 310 (Ala-310) interacts with NAD(+). Residues Leu-311, Ala-312, and Ser-313 each contribute to the FAD site. Gly-341 contributes to the NAD(+) binding site. Position 439 (Phe-439) interacts with FAD.

It belongs to the class-III pyridine nucleotide-disulfide oxidoreductase family. The cofactor is FAD.

It localises to the secreted. The protein localises to the cell wall. It catalyses the reaction 2 NADH + O2 + 2 H(+) = 2 NAD(+) + 2 H2O. Catalyzes the four-electron reduction of molecular oxygen to water. Plays a role in redox balance maintenance. May be involved in mediating bacterial adhesion to host cells. May be considered a potential virulence factor. This Streptococcus pneumoniae (strain ATCC BAA-255 / R6) protein is NADH oxidase.